A 513-amino-acid polypeptide reads, in one-letter code: 2,3-bisphosphoglycerate-independent phosphoglycerate mutase (513 aa).

Residues Asp14 and Ser64 each contribute to the Mn(2+) site. The Phosphoserine intermediate role is filled by Ser64. Residues His125, 155-156 (RD), Arg187, Arg193, 259-262 (RADR), and Lys333 contribute to the substrate site. Positions 400, 404, 441, 442, and 460 each coordinate Mn(2+).

It belongs to the BPG-independent phosphoglycerate mutase family. As to quaternary structure, monomer. Mn(2+) serves as cofactor.

It carries out the reaction (2R)-2-phosphoglycerate = (2R)-3-phosphoglycerate. The protein operates within carbohydrate degradation; glycolysis; pyruvate from D-glyceraldehyde 3-phosphate: step 3/5. Catalyzes the interconversion of 2-phosphoglycerate and 3-phosphoglycerate. The protein is 2,3-bisphosphoglycerate-independent phosphoglycerate mutase of Pseudomonas fluorescens (strain ATCC BAA-477 / NRRL B-23932 / Pf-5).